The following is a 101-amino-acid chain: Large ribosomal subunit protein bL28 (101 aa).

This sequence belongs to the bacterial ribosomal protein bL28 family.

The polypeptide is Large ribosomal subunit protein bL28 (Rhodopseudomonas palustris (strain BisB5)).